The primary structure comprises 250 residues: Imidazole glycerol phosphate synthase subunit HisF (250 aa).

Active-site residues include D11 and D130.

This sequence belongs to the HisA/HisF family. In terms of assembly, heterodimer of HisH and HisF.

It localises to the cytoplasm. It carries out the reaction 5-[(5-phospho-1-deoxy-D-ribulos-1-ylimino)methylamino]-1-(5-phospho-beta-D-ribosyl)imidazole-4-carboxamide + L-glutamine = D-erythro-1-(imidazol-4-yl)glycerol 3-phosphate + 5-amino-1-(5-phospho-beta-D-ribosyl)imidazole-4-carboxamide + L-glutamate + H(+). Its pathway is amino-acid biosynthesis; L-histidine biosynthesis; L-histidine from 5-phospho-alpha-D-ribose 1-diphosphate: step 5/9. IGPS catalyzes the conversion of PRFAR and glutamine to IGP, AICAR and glutamate. The HisF subunit catalyzes the cyclization activity that produces IGP and AICAR from PRFAR using the ammonia provided by the HisH subunit. The sequence is that of Imidazole glycerol phosphate synthase subunit HisF from Elusimicrobium minutum (strain Pei191).